The sequence spans 446 residues: MDIAAFFAAEVKPALGCTEPGAVALAAATAARHLPAPPERIHLRLSANIYKNGQSVGIPGAQGLRGNMLASALGALAGDADMGLQALAAVTADDVAAARALTERGAVTQEIVQDVPTVYAEAELYRPGHLVVAVVAGRHDRVAEVRHNGQVVYRAEDALGGDSLPPYMADLQRAAFGDLWNWADGIDADLARDLLRGAEMNLAVAEQGLANPWGLAVGHTLGMALRGGDCRNDSASDARAPGSCVPDACGPDISARVKATTAAAADVRMAGANQPVMSSAGSGNHGLTAIIPPALAARAWGRSDAELARALALSHLVTGAVKARTGRLTPLCGCAVAAGAGAAAALVRLADGTPAQAEQAVALVFSSVMGMICDGAKGGCALKVGTAAAEAWSAAQLALHGPGMTGAEGIVSPDFRASLRSLGEVSSLGFAAVDVAIIRLLERGVQ.

It belongs to the UPF0597 family.

This is UPF0597 protein DvMF_1488 from Nitratidesulfovibrio vulgaris (strain DSM 19637 / Miyazaki F) (Desulfovibrio vulgaris).